The primary structure comprises 452 residues: Pup--protein ligase (452 aa).

Glu9 provides a ligand contact to Mg(2+). An ATP-binding site is contributed by Arg53. Tyr55 is a Mg(2+) binding site. The Proton acceptor role is filled by Asp57. Glu63 provides a ligand contact to Mg(2+). ATP contacts are provided by Thr66 and Trp419.

This sequence belongs to the Pup ligase/Pup deamidase family. Pup-conjugating enzyme subfamily.

It carries out the reaction ATP + [prokaryotic ubiquitin-like protein]-L-glutamate + [protein]-L-lysine = ADP + phosphate + N(6)-([prokaryotic ubiquitin-like protein]-gamma-L-glutamyl)-[protein]-L-lysine.. It participates in protein degradation; proteasomal Pup-dependent pathway. It functions in the pathway protein modification; protein pupylation. Functionally, catalyzes the covalent attachment of the prokaryotic ubiquitin-like protein modifier Pup to the proteasomal substrate proteins, thereby targeting them for proteasomal degradation. This tagging system is termed pupylation. The ligation reaction involves the side-chain carboxylate of the C-terminal glutamate of Pup and the side-chain amino group of a substrate lysine. This Mycobacterium sp. (strain JLS) protein is Pup--protein ligase.